Reading from the N-terminus, the 388-residue chain is Basigin (388 aa).

The signal sequence occupies residues 1–21 (MAAGADVPCAVLALLVLGSLA). The Extracellular portion of the chain corresponds to 27–323 (TAGFIKSPLS…SGSATVNLRV (297 aa)). Residues 43 to 131 (DSVELHCEAV…NHLSKSPKVK (89 aa)) enclose the Ig-like domain. 2 disulfide bridges follow: Cys-49-Cys-113 and Cys-162-Cys-211. An Ig-like C2-type domain is found at 143–218 (ERPVITGQYS…YECIYNTNPV (76 aa)). 5 N-linked (GlcNAc...) asparagine glycosylation sites follow: Asn-163, Asn-222, Asn-280, Asn-286, and Asn-307. Residues 229–323 (PQVVAYKKSE…SGSATVNLRV (95 aa)) form the Ig-like V-type domain. Cys-250 and Cys-306 are joined by a disulfide. The chain crosses the membrane as a helical span at residues 324-344 (RSRLAALWPFLGIVAEVLVLV). The Cytoplasmic segment spans residues 345–388 (TIIFIYEKRRKPDEVLDDDDGGSAPLKSNATNHKDKNVRQRNAN). The disordered stretch occupies residues 358 to 388 (EVLDDDDGGSAPLKSNATNHKDKNVRQRNAN).

In terms of assembly, interacts with NXNL1, SLC2A1 and SLC16A1. Post-translationally, N-glycosylated. As to expression, retinal cone photoreceptors (at protein level). Brain endothelial cells, kidney epithelial cells and erythroblasts (at protein level).

The protein localises to the cell membrane. The protein resides in the photoreceptor inner segment. It localises to the cell projection. Its subcellular location is the cilium. It is found in the photoreceptor outer segment. The protein localises to the endoplasmic reticulum membrane. The protein resides in the basolateral cell membrane. Essential for normal retinal maturation and development. Acts as a retinal cell surface receptor for NXNL1 and plays an important role in NXNL1-mediated survival of retinal cone photoreceptors. In association with glucose transporter SLC16A1/GLUT1 and NXNL1, promotes retinal cone survival by enhancing aerobic glycolysis and accelerating the entry of glucose into photoreceptors. Functionally, signaling receptor for cyclophilins, essential for PPIA/CYPA and PPIB/CYPB-dependent signaling related to chemotaxis and adhesion of immune cells. Plays an important role in targeting the monocarboxylate transporters SLC16A1/GLUT1, SLC16A3, SLC16A8, SLC16A11 and SLC16A12 to the plasma membrane. Acts as a coreceptor for vascular endothelial growth factor receptor 2 (KDR/VEGFR2) in endothelial cells enhancing its VEGFA-mediated activation and downstream signaling. Promotes angiogenesis through EPAS1/HIF2A-mediated up-regulation of VEGFA and KDR/VEGFR2 in endothelial cells. In Gallus gallus (Chicken), this protein is Basigin (BSG).